Consider the following 305-residue polypeptide: UDP-3-O-acyl-N-acetylglucosamine deacetylase (305 aa).

The Zn(2+) site is built by His79, His238, and Asp242. His265 acts as the Proton donor in catalysis.

This sequence belongs to the LpxC family. It depends on Zn(2+) as a cofactor.

The enzyme catalyses a UDP-3-O-[(3R)-3-hydroxyacyl]-N-acetyl-alpha-D-glucosamine + H2O = a UDP-3-O-[(3R)-3-hydroxyacyl]-alpha-D-glucosamine + acetate. Its pathway is glycolipid biosynthesis; lipid IV(A) biosynthesis; lipid IV(A) from (3R)-3-hydroxytetradecanoyl-[acyl-carrier-protein] and UDP-N-acetyl-alpha-D-glucosamine: step 2/6. Functionally, catalyzes the hydrolysis of UDP-3-O-myristoyl-N-acetylglucosamine to form UDP-3-O-myristoylglucosamine and acetate, the committed step in lipid A biosynthesis. The chain is UDP-3-O-acyl-N-acetylglucosamine deacetylase from Shigella boydii serotype 4 (strain Sb227).